A 400-amino-acid polypeptide reads, in one-letter code: U-box domain-containing protein 37 (400 aa).

A coiled-coil region spans residues 229–298 (KEWESAYLEE…RKAKEERDLL (70 aa)). The 75-residue stretch at 324–398 (EAPQYFICPI…QEWLHASSSF (75 aa)) folds into the U-box domain.

The catalysed reaction is S-ubiquitinyl-[E2 ubiquitin-conjugating enzyme]-L-cysteine + [acceptor protein]-L-lysine = [E2 ubiquitin-conjugating enzyme]-L-cysteine + N(6)-ubiquitinyl-[acceptor protein]-L-lysine.. Its pathway is protein modification; protein ubiquitination. In terms of biological role, functions as an E3 ubiquitin ligase. The sequence is that of U-box domain-containing protein 37 (PUB37) from Arabidopsis thaliana (Mouse-ear cress).